A 332-amino-acid chain; its full sequence is MSTPEVVREAQSTVAYNPLAKQKAAAKLSRIPIKVEQGEVLKKPEWIRVKAGSPTTRFYEIKEILREHKLHTVCEEASCPNIGECFGKGTATFMIMGDKCTRRCPFCDVGHGRPDPLDKDEPLNLARTIAALKLKYVVITSVDRDDLRDGGSGHFVECIQNIRALSPATQIEILVPDFRGRDDRALEILKAAPPDVMNHNLETAPRLYKEARPGSDYQFSLNLLKKFKALHPGVPTKSGIMVGLGETDEEILQVMRDMRAHDIDMLTIGQYLAPSNSHLPVRRYVHPDTFKMYEEEAYKMGFTHAAVGAMVRSSYHADQQAHAAGLQAGPQG.

[4Fe-4S] cluster-binding residues include Cys74, Cys79, Cys85, Cys100, Cys104, Cys107, and Ser314. Residues 85-303 enclose the Radical SAM core domain; it reads CFGKGTATFM…EEEAYKMGFT (219 aa).

This sequence belongs to the radical SAM superfamily. Lipoyl synthase family. The cofactor is [4Fe-4S] cluster.

The protein resides in the cytoplasm. The enzyme catalyses [[Fe-S] cluster scaffold protein carrying a second [4Fe-4S](2+) cluster] + N(6)-octanoyl-L-lysyl-[protein] + 2 oxidized [2Fe-2S]-[ferredoxin] + 2 S-adenosyl-L-methionine + 4 H(+) = [[Fe-S] cluster scaffold protein] + N(6)-[(R)-dihydrolipoyl]-L-lysyl-[protein] + 4 Fe(3+) + 2 hydrogen sulfide + 2 5'-deoxyadenosine + 2 L-methionine + 2 reduced [2Fe-2S]-[ferredoxin]. The protein operates within protein modification; protein lipoylation via endogenous pathway; protein N(6)-(lipoyl)lysine from octanoyl-[acyl-carrier-protein]: step 2/2. In terms of biological role, catalyzes the radical-mediated insertion of two sulfur atoms into the C-6 and C-8 positions of the octanoyl moiety bound to the lipoyl domains of lipoate-dependent enzymes, thereby converting the octanoylated domains into lipoylated derivatives. The polypeptide is Lipoyl synthase (Paracidovorax citrulli (strain AAC00-1) (Acidovorax citrulli)).